The sequence spans 874 residues: Alanine--tRNA ligase (874 aa).

Residues His-563, His-567, Cys-665, and His-669 each contribute to the Zn(2+) site.

The protein belongs to the class-II aminoacyl-tRNA synthetase family. The cofactor is Zn(2+).

It is found in the cytoplasm. The enzyme catalyses tRNA(Ala) + L-alanine + ATP = L-alanyl-tRNA(Ala) + AMP + diphosphate. Its function is as follows. Catalyzes the attachment of alanine to tRNA(Ala) in a two-step reaction: alanine is first activated by ATP to form Ala-AMP and then transferred to the acceptor end of tRNA(Ala). Also edits incorrectly charged Ser-tRNA(Ala) and Gly-tRNA(Ala) via its editing domain. This Histophilus somni (strain 129Pt) (Haemophilus somnus) protein is Alanine--tRNA ligase.